We begin with the raw amino-acid sequence, 343 residues long: Melanoma-associated antigen B18 (343 aa).

The span at 1-17 (MPRGQKSKLRAREKRHQ) shows a compositional bias: basic residues. Residues 1–102 (MPRGQKSKLR…LGSSREAEGW (102 aa)) form a disordered region. The segment covering 67-87 (APSTTNAIAPVSCSSNEGASS) has biased composition (polar residues). A compositionally biased stretch (basic and acidic residues) spans 88 to 102 (QDEKSLGSSREAEGW). An interaction with LNX1 region spans residues 100–343 (EGWKEDPLNK…TTSSSFSHAK (244 aa)). Residues 107 to 306 (LNKKVVSLVH…SAFPSCYEEA (200 aa)) enclose the MAGE domain. Residues 313 to 343 (RTQARAAARAHTAAMANARSRTTSSSFSHAK) are disordered. Over residues 316–333 (ARAAARAHTAAMANARSR) the composition is skewed to low complexity. Over residues 334 to 343 (TTSSSFSHAK) the composition is skewed to polar residues.

As to quaternary structure, interacts with LNX1.

It localises to the cytoplasm. In terms of biological role, may enhance ubiquitin ligase activity of RING-type zinc finger-containing E3 ubiquitin-protein ligases. Proposed to act through recruitment and/or stabilization of the Ubl-conjugating enzyme (E2) at the E3:substrate complex. The chain is Melanoma-associated antigen B18 (MAGEB18) from Homo sapiens (Human).